A 376-amino-acid polypeptide reads, in one-letter code: Alpha-2,8-sialyltransferase 8E (376 aa).

The chain crosses the membrane as a helical span at residues 17–37; the sequence is TLLFIFICAFALVTLLQQILY. Residue asparagine 56 is glycosylated (N-linked (GlcNAc...) asparagine). 2 cysteine pairs are disulfide-bonded: cysteine 164–cysteine 313 and cysteine 178–cysteine 373. Residues asparagine 192 and 214–216 contribute to the substrate site; that span reads NPS. An N-linked (GlcNAc...) asparagine glycan is attached at asparagine 241. Residue 300-302 coordinates substrate; the sequence is STG. Catalysis depends on histidine 348, which acts as the Proton donor/acceptor.

The protein belongs to the glycosyltransferase 29 family. Expressed in liver.

The protein resides in the golgi apparatus membrane. It carries out the reaction a ganglioside GT1b (d18:1(4E)) + CMP-N-acetyl-beta-neuraminate = a ganglioside GQ1b (d18:1(4E)) + CMP + H(+). The catalysed reaction is a ganglioside GQ1c (d18:1(4E)) + CMP-N-acetyl-beta-neuraminate = a ganglioside GP1c (d18:1(4E)) + CMP + H(+). The enzyme catalyses a ganglioside GD3 (d18:1(4E)) + CMP-N-acetyl-beta-neuraminate = a ganglioside GT3 (d18:1(4E)) + CMP + H(+). It catalyses the reaction a ganglioside GD1a (d18:1(4E)) + CMP-N-acetyl-beta-neuraminate = a ganglioside GT1a (d18:1(4E)) + CMP + H(+). It carries out the reaction a ganglioside GM1b (d18:1(4E)) + CMP-N-acetyl-beta-neuraminate = a ganglioside GD1c (d18:1(4E)) + CMP + H(+). Its pathway is protein modification; protein glycosylation. In terms of biological role, involved in the synthesis of gangliosides GD1c, GT1a, GQ1b, GP1c and GT3 from GD1a, GT1b, GM1b and GD3 respectively. In Rattus norvegicus (Rat), this protein is Alpha-2,8-sialyltransferase 8E.